The chain runs to 131 residues: UPF0102 protein YraN (131 aa).

The span at M1 to T19 shows a compositional bias: polar residues. A disordered region spans residues M1–D21.

The protein belongs to the UPF0102 family.

This chain is UPF0102 protein YraN, found in Shigella flexneri serotype 5b (strain 8401).